The chain runs to 150 residues: Small ribosomal subunit protein uS11 (150 aa).

The interval 126–150 is disordered; the sequence is GRIEDVTPTPSDSTRRKGGRRGRRL. Residues 141-150 show a composition bias toward basic residues; sequence RKGGRRGRRL.

This sequence belongs to the universal ribosomal protein uS11 family. In terms of assembly, component of the small ribosomal subunit (SSU). Mature N.crassa ribosomes consist of a small (40S) and a large (60S) subunit. The 40S small subunit contains 1 molecule of ribosomal RNA (18S rRNA) and at least 32 different proteins. The large 60S subunit contains 3 rRNA molecules (26S, 5.8S and 5S rRNA) and at least 42 different proteins.

Its subcellular location is the cytoplasm. Component of the ribosome, a large ribonucleoprotein complex responsible for the synthesis of proteins in the cell. The small ribosomal subunit (SSU) binds messenger RNAs (mRNAs) and translates the encoded message by selecting cognate aminoacyl-transfer RNA (tRNA) molecules. The large subunit (LSU) contains the ribosomal catalytic site termed the peptidyl transferase center (PTC), which catalyzes the formation of peptide bonds, thereby polymerizing the amino acids delivered by tRNAs into a polypeptide chain. The nascent polypeptides leave the ribosome through a tunnel in the LSU and interact with protein factors that function in enzymatic processing, targeting, and the membrane insertion of nascent chains at the exit of the ribosomal tunnel. uS11 is involved in nucleolar processing of pre-18S ribosomal RNA and ribosome assembly. The polypeptide is Small ribosomal subunit protein uS11 (rps-14) (Neurospora crassa (strain ATCC 24698 / 74-OR23-1A / CBS 708.71 / DSM 1257 / FGSC 987)).